A 599-amino-acid chain; its full sequence is MDKKNIRNFSIIAHIDHGKSTLSDRLIEITETVSKREMKNQLLDSMELERERGITIKLNAVQLKFKRNNQDYTFHLIDTPGHVDFTYEVSRSLAACEAALLVVDATQGVQAQTLSNVYLALENNLEIIPVINKVDLPSADVERVKREIETKIGIDCSDVPLISAKTGLNIDQVLDVIIKKVPSPKNANDNDPLKALIFDSYYDPHKGVVCFIRIFDGKLKVGDEILFMANNVKYIVTEVGIKNPNMQSRAYLEAGEVGYVTASIKTIRDVHVGDTITNANNPCDKPLVGYRKVSSMVYAGLYPVDTADYQNLKVAMEKIVLTDAALEYEYETSNALGFGVRCGFLGLLHMDVIRERIVREYNIPLILLAPSVMYKCYLTDGQELKVDNPANMPERNRIKSMLEPYVKLSISTPDEFIGPIMELCQNFRGEYMELSEIDSSRKVLVYEIPLAEIIYSFFDKLKSVTKGYASLDYELIGYRDSNLVKVDILLNGQKVDALSFISHTQFVYQKAKKIVEKLKTLIPRHLFEIPIQAAVGSKIISRETIKAMRKNVLAKCYGGDVSRKKKLLEQQKEGKKRLKAIGSVQIPQETFSKLLQDDE.

The tr-type G domain occupies 4 to 185 (KNIRNFSIIA…VIIKKVPSPK (182 aa)). GTP is bound by residues 16 to 21 (DHGKST) and 132 to 135 (NKVD).

It belongs to the TRAFAC class translation factor GTPase superfamily. Classic translation factor GTPase family. LepA subfamily.

The protein localises to the cell membrane. It carries out the reaction GTP + H2O = GDP + phosphate + H(+). Functionally, required for accurate and efficient protein synthesis under certain stress conditions. May act as a fidelity factor of the translation reaction, by catalyzing a one-codon backward translocation of tRNAs on improperly translocated ribosomes. Back-translocation proceeds from a post-translocation (POST) complex to a pre-translocation (PRE) complex, thus giving elongation factor G a second chance to translocate the tRNAs correctly. Binds to ribosomes in a GTP-dependent manner. This is Elongation factor 4 from Mycoplasmoides gallisepticum (strain R(low / passage 15 / clone 2)) (Mycoplasma gallisepticum).